Here is a 246-residue protein sequence, read N- to C-terminus: 4-hydroxy-tetrahydrodipicolinate reductase (246 aa).

An NAD(+)-binding site is contributed by 7 to 12 (GCSGRM). R34 provides a ligand contact to NADP(+). Residues 76-78 (ATT) and 102-105 (CPNT) each bind NAD(+). Catalysis depends on H135, which acts as the Proton donor/acceptor. H136 is a binding site for (S)-2,3,4,5-tetrahydrodipicolinate. K139 serves as the catalytic Proton donor. (S)-2,3,4,5-tetrahydrodipicolinate is bound at residue 145–146 (GT).

The protein belongs to the DapB family.

It localises to the cytoplasm. The enzyme catalyses (S)-2,3,4,5-tetrahydrodipicolinate + NAD(+) + H2O = (2S,4S)-4-hydroxy-2,3,4,5-tetrahydrodipicolinate + NADH + H(+). It catalyses the reaction (S)-2,3,4,5-tetrahydrodipicolinate + NADP(+) + H2O = (2S,4S)-4-hydroxy-2,3,4,5-tetrahydrodipicolinate + NADPH + H(+). It participates in amino-acid biosynthesis; L-lysine biosynthesis via DAP pathway; (S)-tetrahydrodipicolinate from L-aspartate: step 4/4. Functionally, catalyzes the conversion of 4-hydroxy-tetrahydrodipicolinate (HTPA) to tetrahydrodipicolinate. This is 4-hydroxy-tetrahydrodipicolinate reductase from Chlamydia abortus (strain DSM 27085 / S26/3) (Chlamydophila abortus).